A 201-amino-acid chain; its full sequence is Recombination protein RecR (201 aa).

The C4-type zinc finger occupies 57–72 (CKYCRTFTEQEQCTIC). The 96-residue stretch at 81–176 (GQICVVESPA…TASRIAHGVP (96 aa)) folds into the Toprim domain.

It belongs to the RecR family.

In terms of biological role, may play a role in DNA repair. It seems to be involved in an RecBC-independent recombinational process of DNA repair. It may act with RecF and RecO. In Photorhabdus laumondii subsp. laumondii (strain DSM 15139 / CIP 105565 / TT01) (Photorhabdus luminescens subsp. laumondii), this protein is Recombination protein RecR.